We begin with the raw amino-acid sequence, 169 residues long: Peptide methionine sulfoxide reductase MsrA (169 aa).

C10 is an active-site residue.

Belongs to the MsrA Met sulfoxide reductase family.

The enzyme catalyses L-methionyl-[protein] + [thioredoxin]-disulfide + H2O = L-methionyl-(S)-S-oxide-[protein] + [thioredoxin]-dithiol. It carries out the reaction [thioredoxin]-disulfide + L-methionine + H2O = L-methionine (S)-S-oxide + [thioredoxin]-dithiol. Functionally, has an important function as a repair enzyme for proteins that have been inactivated by oxidation. Catalyzes the reversible oxidation-reduction of methionine sulfoxide in proteins to methionine. In Streptococcus pyogenes serotype M12 (strain MGAS2096), this protein is Peptide methionine sulfoxide reductase MsrA.